A 442-amino-acid chain; its full sequence is tRNA-2-methylthio-N(6)-dimethylallyladenosine synthase (442 aa).

The 118-residue stretch at lysine 5–arginine 122 folds into the MTTase N-terminal domain. Residues cysteine 14, cysteine 51, cysteine 85, cysteine 159, cysteine 163, and cysteine 166 each coordinate [4Fe-4S] cluster. The region spanning arginine 145 to alanine 377 is the Radical SAM core domain. In terms of domain architecture, TRAM spans alanine 380–valine 442.

The protein belongs to the methylthiotransferase family. MiaB subfamily. Monomer. [4Fe-4S] cluster serves as cofactor.

It localises to the cytoplasm. It carries out the reaction N(6)-dimethylallyladenosine(37) in tRNA + (sulfur carrier)-SH + AH2 + 2 S-adenosyl-L-methionine = 2-methylsulfanyl-N(6)-dimethylallyladenosine(37) in tRNA + (sulfur carrier)-H + 5'-deoxyadenosine + L-methionine + A + S-adenosyl-L-homocysteine + 2 H(+). In terms of biological role, catalyzes the methylthiolation of N6-(dimethylallyl)adenosine (i(6)A), leading to the formation of 2-methylthio-N6-(dimethylallyl)adenosine (ms(2)i(6)A) at position 37 in tRNAs that read codons beginning with uridine. The chain is tRNA-2-methylthio-N(6)-dimethylallyladenosine synthase from Methylobacillus flagellatus (strain ATCC 51484 / DSM 6875 / VKM B-1610 / KT).